Here is a 61-residue protein sequence, read N- to C-terminus: Protein YncO (61 aa).

A helical membrane pass occupies residues His18 to Tyr38.

It is found in the cell inner membrane. The protein is Protein YncO of Escherichia coli (strain K12).